We begin with the raw amino-acid sequence, 288 residues long: Phytanoyl-CoA dioxygenase domain-containing protein 1 homolog (288 aa).

2-oxoglutarate-binding positions include Lys-95, Met-134, 149 to 151 (HVD), and Trp-167. His-149 and Asp-151 together coordinate Fe cation. His-242 contacts Fe cation. Residues Ser-244 and Arg-253 each contribute to the 2-oxoglutarate site.

The protein belongs to the PhyH family. PHYHD1 subfamily. Fe cation serves as cofactor.

Functionally, has alpha-ketoglutarate-dependent dioxygenase activity. Does not show detectable activity towards fatty acid CoA thioesters. Is not expected to be active with phytanoyl CoA. This is Phytanoyl-CoA dioxygenase domain-containing protein 1 homolog from Caenorhabditis briggsae.